The chain runs to 732 residues: Lanosterol synthase (732 aa).

Thr2 carries the post-translational modification N-acetylthreonine. PFTB repeat units follow at residues 77 to 121, 124 to 165, 424 to 468, 483 to 528, 560 to 600, 612 to 653, and 670 to 712; these read ALNG…PLPA, REEI…RILG, PDNP…LLLQ, LCDA…MIDY, LTQG…ACMG, VSRA…HNTC, and QERG…NIFP. Asp455 serves as the catalytic Proton donor.

This sequence belongs to the terpene cyclase/mutase family. Monomer. As to expression, widely expressed. Expressed in the hair bulb, the outer root sheath and hair matrix of the hair follicle epithelium. Also detected in dermal papilla, epidermis, sweat glands, sebaceous glands, and blood vessels.

It localises to the endoplasmic reticulum membrane. It catalyses the reaction (S)-2,3-epoxysqualene = lanosterol. It functions in the pathway terpene metabolism; lanosterol biosynthesis; lanosterol from farnesyl diphosphate: step 3/3. Its function is as follows. Key enzyme in the cholesterol biosynthesis pathway. Catalyzes the cyclization of (S)-2,3 oxidosqualene to lanosterol, a reaction that forms the sterol nucleus. Through the production of lanosterol may regulate lens protein aggregation and increase transparency. The polypeptide is Lanosterol synthase (LSS) (Homo sapiens (Human)).